A 420-amino-acid chain; its full sequence is ATP phosphoribosyltransferase regulatory subunit (420 aa).

The protein belongs to the class-II aminoacyl-tRNA synthetase family. HisZ subfamily. In terms of assembly, heteromultimer composed of HisG and HisZ subunits.

It is found in the cytoplasm. It participates in amino-acid biosynthesis; L-histidine biosynthesis; L-histidine from 5-phospho-alpha-D-ribose 1-diphosphate: step 1/9. Required for the first step of histidine biosynthesis. May allow the feedback regulation of ATP phosphoribosyltransferase activity by histidine. In Bacillus cereus (strain B4264), this protein is ATP phosphoribosyltransferase regulatory subunit.